The sequence spans 364 residues: Spermidine/putrescine import ATP-binding protein PotA (364 aa).

The ABC transporter domain occupies 6–236 (IEIRQIYKSY…PANLHVAMFI (231 aa)). An ATP-binding site is contributed by 38 to 45 (GPSGCGKT).

It belongs to the ABC transporter superfamily. Spermidine/putrescine importer (TC 3.A.1.11.1) family. As to quaternary structure, the complex is composed of two ATP-binding proteins (PotA), two transmembrane proteins (PotB and PotC) and a solute-binding protein (PotD).

It is found in the cell inner membrane. It catalyses the reaction ATP + H2O + polyamine-[polyamine-binding protein]Side 1 = ADP + phosphate + polyamineSide 2 + [polyamine-binding protein]Side 1.. In terms of biological role, part of the ABC transporter complex PotABCD involved in spermidine/putrescine import. Responsible for energy coupling to the transport system. This is Spermidine/putrescine import ATP-binding protein PotA from Legionella pneumophila (strain Paris).